Consider the following 600-residue polypeptide: Glutamine--fructose-6-phosphate aminotransferase [isomerizing] (600 aa).

C2 acts as the Nucleophile; for GATase activity in catalysis. A Glutamine amidotransferase type-2 domain is found at 2–217; it reads CGIVGFIGEQ…DKEIVIVMKE (216 aa). 2 SIS domains span residues 283–422 and 452–590; these read IRNA…AKGE and LAKQ…VDKP. The For Fru-6P isomerization activity role is filled by K595.

As to quaternary structure, homodimer.

It localises to the cytoplasm. It catalyses the reaction D-fructose 6-phosphate + L-glutamine = D-glucosamine 6-phosphate + L-glutamate. Its function is as follows. Catalyzes the first step in hexosamine metabolism, converting fructose-6P into glucosamine-6P using glutamine as a nitrogen source. The chain is Glutamine--fructose-6-phosphate aminotransferase [isomerizing] from Bacillus thuringiensis subsp. konkukian (strain 97-27).